The sequence spans 351 residues: Photosystem II D2 protein (351 aa).

The helical transmembrane segment at T39–T59 threads the bilayer. H116 is a binding site for chlorophyll a. Residues G123–P139 traverse the membrane as a helical segment. Q128 and N141 together coordinate pheophytin a. The chain crosses the membrane as a helical span at residues V151–S164. H196 contributes to the chlorophyll a binding site. The helical transmembrane segment at G206–E226 threads the bilayer. The a plastoquinone site is built by H213 and F260. H213 contributes to the Fe cation binding site. Residue H267 coordinates Fe cation. A helical membrane pass occupies residues G277–R293.

This sequence belongs to the reaction center PufL/M/PsbA/D family. In terms of assembly, PSII is composed of 1 copy each of membrane proteins PsbA, PsbB, PsbC, PsbD, PsbE, PsbF, PsbH, PsbI, PsbJ, PsbK, PsbL, PsbM, PsbT, PsbX, PsbY, PsbZ, Psb30/Ycf12, peripheral proteins PsbO, CyanoQ (PsbQ), PsbU, PsbV and a large number of cofactors. It forms dimeric complexes. It depends on The D1/D2 heterodimer binds P680, chlorophylls that are the primary electron donor of PSII, and subsequent electron acceptors. It shares a non-heme iron and each subunit binds pheophytin, quinone, additional chlorophylls, carotenoids and lipids. There is also a Cl(-1) ion associated with D1 and D2, which is required for oxygen evolution. The PSII complex binds additional chlorophylls, carotenoids and specific lipids. as a cofactor.

It is found in the host cellular thylakoid membrane. It carries out the reaction 2 a plastoquinone + 4 hnu + 2 H2O = 2 a plastoquinol + O2. In terms of biological role, photosystem II (PSII) is a light-driven water:plastoquinone oxidoreductase that uses light energy to abstract electrons from H(2)O, generating O(2) and a proton gradient subsequently used for ATP formation. It consists of a core antenna complex that captures photons, and an electron transfer chain that converts photonic excitation into a charge separation. The D1/D2 (PsbA/PsbD) reaction center heterodimer binds P680, the primary electron donor of PSII as well as several subsequent electron acceptors. D2 is needed for assembly of a stable PSII complex. The chain is Photosystem II D2 protein (psbD) from Synechococcus phage S-RSM2.